Here is a 511-residue protein sequence, read N- to C-terminus: Protein HESO1 (511 aa).

The segment at 378–511 is disordered; the sequence is ARPQNQQMQQ…GQIWRPRHEQ (134 aa). The span at 381-392 shows a compositional bias: low complexity; it reads QNQQMQQNWSQS. Polar residues predominate over residues 404-465; that stretch reads LTQSRPQQNW…TSAGSSQNQG (62 aa).

This sequence belongs to the DNA polymerase type-B-like family.

It localises to the cytoplasm. The protein localises to the P-body. Its subcellular location is the nucleus. The enzyme catalyses RNA(n) + UTP = RNA(n)-3'-uridine ribonucleotide + diphosphate. With respect to regulation, completely inhibited by 2'-O-methylation on the substrate RNA. Its function is as follows. Uridylates small RNAs to trigger their degradation. Catalyzes the uridylation of 5' fragments produced by AGO1-mediated cleavage of miRNA target RNAs. Acts synergistically with URT1 in unmethylated miRNA uridylation, leading to their degradation. URT1 and HESO1 prefer substrates with different 3' end nucleotides and act cooperatively to tail different forms of the same miRNAs. URT1 and HESO1 act sequentially, with URT1 mono-uridylating the miRNAs followed by their further uridylation by HESO1. URT1 and HESO1 are involved in the uridylation and clearance of RISC-generated 5' mRNA fragments. Able to act on AGO1-bound miRNAs and the uridylated species stay associated with AGO1. This chain is Protein HESO1, found in Arabidopsis thaliana (Mouse-ear cress).